A 478-amino-acid chain; its full sequence is Quinoprotein glucose dehydrogenase B (478 aa).

The first 24 residues, 1 to 24 (MNKHLLAKIALLSAVQLVTLSAFA), serve as a signal peptide directing secretion. D-glucose contacts are provided by glutamine 100 and aspartate 167. The Proton acceptor role is filled by histidine 168. 2 residues coordinate D-glucose: glutamine 192 and arginine 252. Residues 252–253 (RN) form a PQQ region. The Ca(2+) site is built by glycine 271, proline 272, glutamate 277, tyrosine 287, alanine 293, tyrosine 295, aspartate 297, and glutamate 333. 3 residues coordinate pyrroloquinoline quinone: tyrosine 367, threonine 372, and lysine 401. Residues 430-432 (RYR) are PQQ.

It belongs to the PQQ oxidoreductase GdhB family. Homodimer. Pyrroloquinoline quinone serves as cofactor. Requires Ca(2+) as cofactor.

The catalysed reaction is a ubiquinone + D-glucose = D-glucono-1,5-lactone + a ubiquinol. Its function is as follows. Oxidizes glucose to gluconolactone. In Acinetobacter calcoaceticus, this protein is Quinoprotein glucose dehydrogenase B (gdhB).